We begin with the raw amino-acid sequence, 428 residues long: Aspartate--tRNA(Asp) ligase (428 aa).

L-aspartate is bound at residue Glu166. Residues 188–191 (QLYK) are aspartate. Arg210 provides a ligand contact to L-aspartate. Residues 210–212 (RAE), 218–220 (RHL), and Glu351 each bind ATP. The Mg(2+) site is built by Glu351 and Ser354. L-aspartate is bound by residues Ser354 and Arg358. 399 to 402 (GLER) contributes to the ATP binding site.

It belongs to the class-II aminoacyl-tRNA synthetase family. Type 2 subfamily. As to quaternary structure, homodimer. The cofactor is Mg(2+).

Its subcellular location is the cytoplasm. The enzyme catalyses tRNA(Asp) + L-aspartate + ATP = L-aspartyl-tRNA(Asp) + AMP + diphosphate. In terms of biological role, catalyzes the attachment of L-aspartate to tRNA(Asp) in a two-step reaction: L-aspartate is first activated by ATP to form Asp-AMP and then transferred to the acceptor end of tRNA(Asp). The sequence is that of Aspartate--tRNA(Asp) ligase from Thermoplasma volcanium (strain ATCC 51530 / DSM 4299 / JCM 9571 / NBRC 15438 / GSS1).